The primary structure comprises 453 residues: Sensor histidine kinase CpxA (453 aa).

Residues 1-4 lie on the Cytoplasmic side of the membrane; the sequence is MTAR. Residues 5 to 25 form a helical membrane-spanning segment; the sequence is IFAIFWLTLALVLMLVLMLPK. The Periplasmic portion of the chain corresponds to 26 to 159; sequence LDSRQMTELL…SDFINLLFDR (134 aa). Residues 160–180 form a helical membrane-spanning segment; the sequence is PLLLLIVTMLVSAPLLLWLAW. One can recognise an HAMP domain in the interval 180 to 233; it reads WSLAKPARKLKNAADEVAQGNLRQHPELEAGPQEFLAAGASFNQMVTALERMMT. At 181–453 the chain is on the cytoplasmic side; the sequence is SLAKPARKLK…TIWLPLYKRT (273 aa). One can recognise a Histidine kinase domain in the interval 241-451; the sequence is DISHELRTPL…RLTIWLPLYK (211 aa). His-244 (nucleophile) is an active-site residue. The residue at position 244 (His-244) is a Phosphohistidine; by autocatalysis. ATP is bound by residues 244–247, 355–360, Asp-382, 401–402, and 412–417; these read HELR, RNALRY, RT, and GTGLGL.

In terms of assembly, interacts with cognate response regulator CpxR.

It is found in the cell inner membrane. It catalyses the reaction ATP + protein L-histidine = ADP + protein N-phospho-L-histidine.. With respect to regulation, the two-component system is activated by envelope stress such as overexpression of some (misfolded) periplasmic proteins. Functionally, histidine kinase member of the two-component regulatory system CpxA/CpxR which responds to envelope stress response by activating or, in some cases, repressing expression of downstream genes. Activates CpxR by phosphorylation. In Klebsiella pneumoniae subsp. pneumoniae (strain HS11286), this protein is Sensor histidine kinase CpxA.